Reading from the N-terminus, the 436-residue chain is Bifunctional IPC transferase and DIPP synthase (436 aa).

The interval 11–241 is mobA-like NTP transferase; sequence GVGAAVLAAG…LSEEMVLGWA (231 aa). Residues 17 to 19 and Lys32 each bind CTP; that span reads LAA. Residues 242 to 435 are CDP-alcohol phosphatidyltransferases; that stretch reads ASGNDGPVSR…RRLLALKRGR (194 aa). 3 consecutive transmembrane segments (helical) span residues 275–295, 349–371, and 397–417; these read VSLLSFALAALGAGLLAAGRL, AGTRLAAAAGYPALAGALLVSYT, and LAVLALGGLLGAPGAALLATG.

The protein in the N-terminal section; belongs to the MobA family. This sequence in the C-terminal section; belongs to the CDP-alcohol phosphatidyltransferase class-I family.

It localises to the membrane. The enzyme catalyses 1D-myo-inositol 3-phosphate + CTP + H(+) = CDP-1L-myo-inositol + diphosphate. It catalyses the reaction CDP-1L-myo-inositol + 1D-myo-inositol 3-phosphate = bis(1L-myo-inositol) 3,1'-phosphate 1-phosphate + CMP + H(+). Functionally, involved in biosynthesis of di-myo-inositol phosphate (DIP), a widespread organic solute in microorganisms adapted to hot environments. Catalyzes the condensation of CTP and L-myo-inositol-1-phosphate into CDP-L-myo-inositol, as well as the biosynthesis of di-myo-inositol-1,3'-phosphate-1'-phosphate (DIPP) from CDP-L-myo-inositol and L-myo-inositol-1-phosphate. The sequence is that of Bifunctional IPC transferase and DIPP synthase from Rubrobacter xylanophilus (strain DSM 9941 / JCM 11954 / NBRC 16129 / PRD-1).